The following is a 223-amino-acid chain: Protein-L-isoaspartate O-methyltransferase (223 aa).

The active site involves Ser-70.

Belongs to the methyltransferase superfamily. L-isoaspartyl/D-aspartyl protein methyltransferase family.

It is found in the cytoplasm. The catalysed reaction is [protein]-L-isoaspartate + S-adenosyl-L-methionine = [protein]-L-isoaspartate alpha-methyl ester + S-adenosyl-L-homocysteine. In terms of biological role, catalyzes the methyl esterification of L-isoaspartyl residues in peptides and proteins that result from spontaneous decomposition of normal L-aspartyl and L-asparaginyl residues. It plays a role in the repair and/or degradation of damaged proteins. The polypeptide is Protein-L-isoaspartate O-methyltransferase (Saccharophagus degradans (strain 2-40 / ATCC 43961 / DSM 17024)).